We begin with the raw amino-acid sequence, 151 residues long: UPF0178 protein PST_0536 (151 aa).

Belongs to the UPF0178 family.

This chain is UPF0178 protein PST_0536, found in Stutzerimonas stutzeri (strain A1501) (Pseudomonas stutzeri).